Reading from the N-terminus, the 334-residue chain is Transcription factor TGA2.1 (334 aa).

Residues 1–13 (MADASSRTDTSIV) are compositionally biased toward polar residues. The tract at residues 1 to 49 (MADASSRTDTSIVVDNDDKNHQLENGHSGAVMASNSSDRSDRSDKLMDQ) is disordered. Over residues 38-49 (DRSDRSDKLMDQ) the composition is skewed to basic and acidic residues. The bZIP domain occupies 48–92 (DQKTIRRLAQNREAARKSRLRKKAYVQQLESSKLKLAQLEQELQK). The segment at 50 to 70 (KTIRRLAQNREAARKSRLRKK) is basic motif. A leucine-zipper region spans residues 76–90 (LESSKLKLAQLEQEL). The region spanning 115–331 (ALTFDLEYTR…RALSSLWLAR (217 aa)) is the DOG1 domain.

This sequence belongs to the bZIP family. Interacts with NPR1/NH1 and NPR3/NH3.

The protein resides in the nucleus. In terms of biological role, plays a negative role in rice basal defense responses to the bacterial blight pathogen Xanthomomas oryzae pv. oryzae (Xoo). May function in both positive and negative regulation of rice defense genes. Binds DNA in vitro. Acts as a transcriptional activator when bound to NPR1/NH1 in vitro. Binds to the promoter sequence of CRK10 in vitro. The protein is Transcription factor TGA2.1 of Oryza sativa subsp. japonica (Rice).